Consider the following 887-residue polypeptide: Endoglucanase 1 (887 aa).

Residues 1 to 55 form the signal peptide; the sequence is MRLVNSLGRRKILLILAVIVAFSTVLLFAKLWGRKTSSTLDEVGSKTHGDLTAEN. The interval 40–66 is disordered; that stretch reads LDEVGSKTHGDLTAENKNGGYLPEEEI. Residues 43-53 are compositionally biased toward basic and acidic residues; the sequence is VGSKTHGDLTA. A catalytic region spans residues 56–518; that stretch reads KNGGYLPEEE…AKMYKLYGGS (463 aa). Aspartate 131 serves as the catalytic Nucleophile. Positions 441–460 are disordered; the sequence is ENPPKRPHHRTAHGSWADSQ. Active-site residues include histidine 448, aspartate 486, and glutamate 495. In terms of domain architecture, CBM3 1 spans 529 to 684; it reads VPEDEIFVEA…GVLVFGREPG (156 aa). Residues 684-730 form a disordered region; sequence GSASKSTSKDNGLSKATPTVKTESQPTAKHTQNPASDFKTPANQNSV. Residues 686–729 are compositionally biased toward polar residues; that stretch reads ASKSTSKDNGLSKATPTVKTESQPTAKHTQNPASDFKTPANQNS. One can recognise a CBM3 2 domain in the interval 736-887; sequence IKGEVVLQYA…SNKLVYGKEP (152 aa).

This sequence belongs to the glycosyl hydrolase 9 (cellulase E) family.

The enzyme catalyses Endohydrolysis of (1-&gt;4)-beta-D-glucosidic linkages in cellulose, lichenin and cereal beta-D-glucans.. The protein operates within glycan metabolism; cellulose degradation. Functionally, this enzyme catalyzes the endohydrolysis of 1,4-beta-glucosidic linkages in cellulose, lichenin and cereal beta-D-glucans. Principally active against barley beta-glucan. The chain is Endoglucanase 1 (celI) from Acetivibrio thermocellus (strain ATCC 27405 / DSM 1237 / JCM 9322 / NBRC 103400 / NCIMB 10682 / NRRL B-4536 / VPI 7372) (Clostridium thermocellum).